We begin with the raw amino-acid sequence, 959 residues long: DNA polymerase 1 (959 aa).

Residues 1 to 110 (MRVRGGQEAA…LTLEPSPQSE (110 aa)) are disordered. The segment covering 44 to 60 (KKPEPPPTLHREREPES) has biased composition (basic and acidic residues).

This sequence belongs to the DNA polymerase type-B family.

It catalyses the reaction DNA(n) + a 2'-deoxyribonucleoside 5'-triphosphate = DNA(n+1) + diphosphate. The chain is DNA polymerase 1 (polA) from Aeropyrum pernix (strain ATCC 700893 / DSM 11879 / JCM 9820 / NBRC 100138 / K1).